The primary structure comprises 336 residues: 4-hydroxy-3-methylbut-2-enyl diphosphate reductase (336 aa).

Residue C37 participates in [4Fe-4S] cluster binding. The (2E)-4-hydroxy-3-methylbut-2-enyl diphosphate site is built by H66 and H99. Dimethylallyl diphosphate is bound by residues H66 and H99. Residues H66 and H99 each coordinate isopentenyl diphosphate. Residue C121 participates in [4Fe-4S] cluster binding. H149 is a binding site for (2E)-4-hydroxy-3-methylbut-2-enyl diphosphate. H149 lines the dimethylallyl diphosphate pocket. H149 is a binding site for isopentenyl diphosphate. The active-site Proton donor is the E151. T189 is a (2E)-4-hydroxy-3-methylbut-2-enyl diphosphate binding site. C219 lines the [4Fe-4S] cluster pocket. Positions 247, 248, 249, and 292 each coordinate (2E)-4-hydroxy-3-methylbut-2-enyl diphosphate. Residues S247, S248, N249, and S292 each contribute to the dimethylallyl diphosphate site. S247, S248, N249, and S292 together coordinate isopentenyl diphosphate.

It belongs to the IspH family. It depends on [4Fe-4S] cluster as a cofactor.

It catalyses the reaction isopentenyl diphosphate + 2 oxidized [2Fe-2S]-[ferredoxin] + H2O = (2E)-4-hydroxy-3-methylbut-2-enyl diphosphate + 2 reduced [2Fe-2S]-[ferredoxin] + 2 H(+). The enzyme catalyses dimethylallyl diphosphate + 2 oxidized [2Fe-2S]-[ferredoxin] + H2O = (2E)-4-hydroxy-3-methylbut-2-enyl diphosphate + 2 reduced [2Fe-2S]-[ferredoxin] + 2 H(+). It functions in the pathway isoprenoid biosynthesis; dimethylallyl diphosphate biosynthesis; dimethylallyl diphosphate from (2E)-4-hydroxy-3-methylbutenyl diphosphate: step 1/1. It participates in isoprenoid biosynthesis; isopentenyl diphosphate biosynthesis via DXP pathway; isopentenyl diphosphate from 1-deoxy-D-xylulose 5-phosphate: step 6/6. Catalyzes the conversion of 1-hydroxy-2-methyl-2-(E)-butenyl 4-diphosphate (HMBPP) into a mixture of isopentenyl diphosphate (IPP) and dimethylallyl diphosphate (DMAPP). Acts in the terminal step of the DOXP/MEP pathway for isoprenoid precursor biosynthesis. In Nocardia farcinica (strain IFM 10152), this protein is 4-hydroxy-3-methylbut-2-enyl diphosphate reductase.